The chain runs to 1532 residues: IgA-specific serine endopeptidase autotransporter (1532 aa).

Residues 1–27 (MKAKRFKINAISLSIFLAYALTPYSEA) form the signal peptide. Positions 28 to 322 (ALVRDDVDYQ…NIYKKEFADK (295 aa)) constitute a Peptidase S6 domain. Residue S278 is part of the active site. 2 disordered regions span residues 979–1136 (GRPV…KDNS) and 1166–1217 (LEDE…NTEL). Positions 989-1004 (AANTASQAQKATQTDG) are enriched in polar residues. The span at 1045 to 1101 (EAEKVARQKDEEAKRKAAEIARQQEEARKAAELAAKQKAEAERKARELARQKAEEAS) shows a compositional bias: basic and acidic residues. Residues 1107–1116 (KPKRRRRRAI) show a composition bias toward basic residues. Over residues 1207 to 1217 (SDKHPQDNTEL) the composition is skewed to basic and acidic residues. Positions 1280–1532 (ADAEKNSVWM…SGQIKIQIRF (253 aa)) constitute an Autotransporter domain.

It localises to the periplasm. Its subcellular location is the secreted. The protein resides in the cell surface. It is found in the cell outer membrane. The catalysed reaction is Cleavage of immunoglobulin A molecules at certain Pro-|-Xaa bonds in the hinge region. No small molecule substrates are known.. Its function is as follows. This protease is specific for immunoglobulin A. The sequence is that of IgA-specific serine endopeptidase autotransporter (iga) from Neisseria gonorrhoeae.